The sequence spans 397 residues: Elongation factor Tu (397 aa).

Residues 10-207 (KPHVNVGTIG…TLDSYIPEPV (198 aa)) enclose the tr-type G domain. Residues 19 to 26 (GHVDHGKT) are G1. Residue 19–26 (GHVDHGKT) participates in GTP binding. Thr26 serves as a coordination point for Mg(2+). A G2 region spans residues 60–64 (GITIN). At Tyr77 the chain carries Phosphotyrosine. The G3 stretch occupies residues 81-84 (DCPG). 81–85 (DCPGH) serves as a coordination point for GTP. Tyr88 is modified (phosphotyrosine). 136 to 139 (NKAD) provides a ligand contact to GTP. Residues 136-139 (NKAD) form a G4 region. The tract at residues 174-176 (SAL) is G5.

Belongs to the TRAFAC class translation factor GTPase superfamily. Classic translation factor GTPase family. EF-Tu/EF-1A subfamily. Monomer.

The protein localises to the cytoplasm. The enzyme catalyses GTP + H2O = GDP + phosphate + H(+). In terms of biological role, GTP hydrolase that promotes the GTP-dependent binding of aminoacyl-tRNA to the A-site of ribosomes during protein biosynthesis. In Pseudomonas aeruginosa (strain UCBPP-PA14), this protein is Elongation factor Tu.